Consider the following 420-residue polypeptide: Histidine--tRNA ligase (420 aa).

This sequence belongs to the class-II aminoacyl-tRNA synthetase family. Homodimer.

Its subcellular location is the cytoplasm. The enzyme catalyses tRNA(His) + L-histidine + ATP = L-histidyl-tRNA(His) + AMP + diphosphate + H(+). The sequence is that of Histidine--tRNA ligase from Nitrosomonas europaea (strain ATCC 19718 / CIP 103999 / KCTC 2705 / NBRC 14298).